The sequence spans 469 residues: tRNA modification GTPase MnmE (469 aa).

Arg26, Glu88, and Arg127 together coordinate (6S)-5-formyl-5,6,7,8-tetrahydrofolate. The 169-residue stretch at 222 to 390 folds into the TrmE-type G domain; the sequence is GLKVAIVGRP…LEDAILHLVQ (169 aa). Asn232 provides a ligand contact to K(+). GTP-binding positions include 232–237, 251–257, 276–279, and 344–347; these read NVGKSS, TDLPGTT, DTAG, and NKAD. A Mg(2+)-binding site is contributed by Ser236. K(+)-binding residues include Thr251, Leu253, and Thr256. Thr257 contacts Mg(2+). Lys469 is a binding site for (6S)-5-formyl-5,6,7,8-tetrahydrofolate.

The protein belongs to the TRAFAC class TrmE-Era-EngA-EngB-Septin-like GTPase superfamily. TrmE GTPase family. In terms of assembly, homodimer. Heterotetramer of two MnmE and two MnmG subunits. K(+) serves as cofactor.

The protein localises to the cytoplasm. Its function is as follows. Exhibits a very high intrinsic GTPase hydrolysis rate. Involved in the addition of a carboxymethylaminomethyl (cmnm) group at the wobble position (U34) of certain tRNAs, forming tRNA-cmnm(5)s(2)U34. The protein is tRNA modification GTPase MnmE of Synechococcus elongatus.